The chain runs to 891 residues: Alanine--tRNA ligase (891 aa).

4 residues coordinate Zn(2+): His-564, His-568, Cys-677, and His-681.

It belongs to the class-II aminoacyl-tRNA synthetase family. Requires Zn(2+) as cofactor.

Its subcellular location is the cytoplasm. The catalysed reaction is tRNA(Ala) + L-alanine + ATP = L-alanyl-tRNA(Ala) + AMP + diphosphate. Its function is as follows. Catalyzes the attachment of alanine to tRNA(Ala) in a two-step reaction: alanine is first activated by ATP to form Ala-AMP and then transferred to the acceptor end of tRNA(Ala). Also edits incorrectly charged Ser-tRNA(Ala) and Gly-tRNA(Ala) via its editing domain. The chain is Alanine--tRNA ligase from Rhodopseudomonas palustris (strain BisA53).